The chain runs to 107 residues: Large ribosomal subunit protein P2-A (107 aa).

The disordered stretch occupies residues 85 to 107 (GAAAPAAAAEEEEDDDMGFGLFD).

The protein belongs to the eukaryotic ribosomal protein P1/P2 family. P1 and P2 exist as dimers at the large ribosomal subunit. Post-translationally, phosphorylated.

Functionally, plays an important role in the elongation step of protein synthesis. The sequence is that of Large ribosomal subunit protein P2-A from Trypanosoma cruzi.